We begin with the raw amino-acid sequence, 159 residues long: 2-C-methyl-D-erythritol 2,4-cyclodiphosphate synthase (159 aa).

The a divalent metal cation site is built by Asp8 and His10. 4-CDP-2-C-methyl-D-erythritol 2-phosphate is bound by residues 8–10 (DVH) and 34–35 (HS). His42 is an a divalent metal cation binding site. 4-CDP-2-C-methyl-D-erythritol 2-phosphate contacts are provided by residues 56-58 (DIG), 61-65 (FPDTD), 100-106 (AQAPKML), 132-135 (TTTE), Phe139, and Arg142.

This sequence belongs to the IspF family. As to quaternary structure, homotrimer. Requires a divalent metal cation as cofactor.

It catalyses the reaction 4-CDP-2-C-methyl-D-erythritol 2-phosphate = 2-C-methyl-D-erythritol 2,4-cyclic diphosphate + CMP. It participates in isoprenoid biosynthesis; isopentenyl diphosphate biosynthesis via DXP pathway; isopentenyl diphosphate from 1-deoxy-D-xylulose 5-phosphate: step 4/6. Involved in the biosynthesis of isopentenyl diphosphate (IPP) and dimethylallyl diphosphate (DMAPP), two major building blocks of isoprenoid compounds. Catalyzes the conversion of 4-diphosphocytidyl-2-C-methyl-D-erythritol 2-phosphate (CDP-ME2P) to 2-C-methyl-D-erythritol 2,4-cyclodiphosphate (ME-CPP) with a corresponding release of cytidine 5-monophosphate (CMP). In Salmonella dublin (strain CT_02021853), this protein is 2-C-methyl-D-erythritol 2,4-cyclodiphosphate synthase.